Reading from the N-terminus, the 236-residue chain is Sugar fermentation stimulation protein homolog (236 aa).

It belongs to the SfsA family.

This Paramagnetospirillum magneticum (strain ATCC 700264 / AMB-1) (Magnetospirillum magneticum) protein is Sugar fermentation stimulation protein homolog.